A 160-amino-acid chain; its full sequence is Sulfur-rich protein (160 aa).

2 consecutive transmembrane segments (helical) span residues isoleucine 62 to leucine 82 and phenylalanine 91 to methionine 111.

Its subcellular location is the membrane. In Chlamydia caviae (strain ATCC VR-813 / DSM 19441 / 03DC25 / GPIC) (Chlamydophila caviae), this protein is Sulfur-rich protein (srp).